Consider the following 116-residue polypeptide: Protein Wnt-5(III) (116 aa).

Ser1 carries O-palmitoleoyl serine; by PORCN lipidation. A glycan (N-linked (GlcNAc...) asparagine) is linked at Asn69. Cys82 and Cys97 are oxidised to a cystine.

Belongs to the Wnt family. Palmitoleoylation is required for efficient binding to frizzled receptors. Depalmitoleoylation leads to Wnt signaling pathway inhibition.

It is found in the secreted. It localises to the extracellular space. The protein localises to the extracellular matrix. Its function is as follows. Ligand for members of the frizzled family of seven transmembrane receptors. Probable developmental protein. May be a signaling molecule which affects the development of discrete regions of tissues. Is likely to signal over only few cell diameters. This chain is Protein Wnt-5(III) (WNT-5(III)), found in Eptatretus stoutii (Pacific hagfish).